Here is a 126-residue protein sequence, read N- to C-terminus: Small ribosomal subunit protein uS8 (126 aa).

Belongs to the universal ribosomal protein uS8 family. As to quaternary structure, part of the 30S ribosomal subunit. Contacts proteins S5 and S12.

Functionally, one of the primary rRNA binding proteins, it binds directly to 16S rRNA central domain where it helps coordinate assembly of the platform of the 30S subunit. The protein is Small ribosomal subunit protein uS8 of Lawsonia intracellularis (strain PHE/MN1-00).